Here is a 119-residue protein sequence, read N- to C-terminus: Large ribosomal subunit protein uL18 (119 aa).

Belongs to the universal ribosomal protein uL18 family. In terms of assembly, part of the 50S ribosomal subunit; part of the 5S rRNA/L5/L18/L25 subcomplex. Contacts the 5S and 23S rRNAs.

This is one of the proteins that bind and probably mediate the attachment of the 5S RNA into the large ribosomal subunit, where it forms part of the central protuberance. In Solibacter usitatus (strain Ellin6076), this protein is Large ribosomal subunit protein uL18.